The following is a 213-amino-acid chain: 3,4-dihydroxy-2-butanone 4-phosphate synthase (213 aa).

D-ribulose 5-phosphate-binding positions include 37–38 (RE), D42, 150–154 (RSGHT), and E174. E38 is a binding site for Mg(2+). H153 contacts Mg(2+).

This sequence belongs to the DHBP synthase family. In terms of assembly, homodimer. Mg(2+) serves as cofactor. Requires Mn(2+) as cofactor.

The enzyme catalyses D-ribulose 5-phosphate = (2S)-2-hydroxy-3-oxobutyl phosphate + formate + H(+). The protein operates within cofactor biosynthesis; riboflavin biosynthesis; 2-hydroxy-3-oxobutyl phosphate from D-ribulose 5-phosphate: step 1/1. Functionally, catalyzes the conversion of D-ribulose 5-phosphate to formate and 3,4-dihydroxy-2-butanone 4-phosphate. This is 3,4-dihydroxy-2-butanone 4-phosphate synthase from Blochmanniella floridana.